The sequence spans 188 residues: Peptidyl-tRNA hydrolase (188 aa).

Y15 is a binding site for tRNA. The active-site Proton acceptor is H20. Residues F66, N68, and N114 each contribute to the tRNA site.

The protein belongs to the PTH family. In terms of assembly, monomer.

It is found in the cytoplasm. It carries out the reaction an N-acyl-L-alpha-aminoacyl-tRNA + H2O = an N-acyl-L-amino acid + a tRNA + H(+). In terms of biological role, hydrolyzes ribosome-free peptidyl-tRNAs (with 1 or more amino acids incorporated), which drop off the ribosome during protein synthesis, or as a result of ribosome stalling. Catalyzes the release of premature peptidyl moieties from peptidyl-tRNA molecules trapped in stalled 50S ribosomal subunits, and thus maintains levels of free tRNAs and 50S ribosomes. The sequence is that of Peptidyl-tRNA hydrolase from Lactococcus lactis subsp. cremoris (strain MG1363).